The sequence spans 86 residues: Small ribosomal subunit protein bS16 (86 aa).

Belongs to the bacterial ribosomal protein bS16 family.

The polypeptide is Small ribosomal subunit protein bS16 (Methylibium petroleiphilum (strain ATCC BAA-1232 / LMG 22953 / PM1)).